A 402-amino-acid chain; its full sequence is NADH-quinone oxidoreductase subunit D 2 (402 aa).

This sequence belongs to the complex I 49 kDa subunit family. In terms of assembly, NDH-1 is composed of 14 different subunits. Subunits NuoB, C, D, E, F, and G constitute the peripheral sector of the complex.

Its subcellular location is the cell inner membrane. It catalyses the reaction a quinone + NADH + 5 H(+)(in) = a quinol + NAD(+) + 4 H(+)(out). In terms of biological role, NDH-1 shuttles electrons from NADH, via FMN and iron-sulfur (Fe-S) centers, to quinones in the respiratory chain. The immediate electron acceptor for the enzyme in this species is believed to be ubiquinone. Couples the redox reaction to proton translocation (for every two electrons transferred, four hydrogen ions are translocated across the cytoplasmic membrane), and thus conserves the redox energy in a proton gradient. This is NADH-quinone oxidoreductase subunit D 2 from Nitrobacter hamburgensis (strain DSM 10229 / NCIMB 13809 / X14).